Consider the following 402-residue polypeptide: Odorant receptor 22c (402 aa).

At 1 to 42 (MTDSGQPAIADHFYRIPRISGLIVGLWPQRIRGGGGRPWHAH) the chain is on the cytoplasmic side. The chain crosses the membrane as a helical span at residues 43 to 63 (LLFVFAFAMVVVGAVGEVSYG). The Extracellular segment spans residues 64–73 (CVHLDNLVVA). A helical transmembrane segment spans residues 74-94 (LEAFCPGTTKAVCVLKLWVFF). The Cytoplasmic segment spans residues 95-134 (RSNRRWAELVQRLRAILWESRRQEAQRMLVGLATTANRLS). The helical transmembrane segment at 135–155 (LLLLSSGTATNAAFTLQPLIM) threads the bilayer. At 156 to 173 (GLYRWIVQLPGQTELPFN) the chain is on the extracellular side. The chain crosses the membrane as a helical span at residues 174–194 (IILPSFAVQPGVFPLTYVLLT). Topologically, residues 195-201 (ASGACTV) are cytoplasmic. The chain crosses the membrane as a helical span at residues 202 to 222 (FAFSFVDGFFICSCLYICGAF). Topologically, residues 223 to 276 (RLVQQDIRRIFADLHGDSVDVFTEEMNAEVRHRLAQVVERHNAIIDFCTDLTRQ) are extracellular. A helical membrane pass occupies residues 277–297 (FTVIVLMHFLSAAFVLCSTIL). The Cytoplasmic portion of the chain corresponds to 298–307 (DIMLNTSSLS). The chain crosses the membrane as a helical span at residues 308 to 328 (GLTYICYIIAALTQLFLYCFG). Over 329-402 (GNHVSESSAA…SYITLLKTFL (74 aa)) the chain is Extracellular.

It belongs to the insect chemoreceptor superfamily. Heteromeric odorant receptor channel (TC 1.A.69) family. Or1a subfamily. As to quaternary structure, interacts with Orco. Complexes exist early in the endomembrane system in olfactory sensory neurons (OSNs), coupling these complexes to the conserved ciliary trafficking pathway. Not expressed in either the antenna or maxillary palp.

Its subcellular location is the cell membrane. Its function is as follows. Odorant receptor which mediates acceptance or avoidance behavior, depending on its substrates. The odorant receptor repertoire encodes a large collection of odor stimuli that vary widely in identity, intensity, and duration. May form a complex with Orco to form odorant-sensing units, providing sensitive and prolonged odorant signaling and calcium permeability. This chain is Odorant receptor 22c (Or22c), found in Drosophila melanogaster (Fruit fly).